The primary structure comprises 343 residues: Selenide, water dikinase (343 aa).

Selenocysteine 16 is an active-site residue. Residue selenocysteine 16 is a non-standard amino acid, selenocysteine. ATP-binding positions include lysine 19 and glycine 46–glutamate 48. Residue aspartate 49 coordinates Mg(2+). Residues aspartate 66, aspartate 89, and glycine 137–threonine 139 contribute to the ATP site. Aspartate 89 lines the Mg(2+) pocket. Aspartate 225 provides a ligand contact to Mg(2+).

This sequence belongs to the selenophosphate synthase 1 family. Class I subfamily. As to quaternary structure, homodimer. It depends on Mg(2+) as a cofactor.

The catalysed reaction is hydrogenselenide + ATP + H2O = selenophosphate + AMP + phosphate + 2 H(+). Its function is as follows. Synthesizes selenophosphate from selenide and ATP. This chain is Selenide, water dikinase, found in Geobacter sp. (strain M21).